The primary structure comprises 417 residues: Hydroxysqualene dehydroxylase (417 aa).

It belongs to the HpnE family.

The enzyme catalyses squalene + FAD + H2O + H(+) = hydroxysqualene + FADH2. The protein operates within secondary metabolite biosynthesis; hopanoid biosynthesis. Its function is as follows. Involved in the biosynthesis of the hopanoid precursor squalene (SQ) from farnesyl diphosphate (FPP). Catalyzes the third (last) step, the reduction of hydroxysqualene (HSQ) to SQ. The polypeptide is Hydroxysqualene dehydroxylase (Sinorhizobium fredii (strain NBRC 101917 / NGR234)).